A 540-amino-acid chain; its full sequence is T-complex protein 1 subunit delta (540 aa).

The span at 1 to 12 shows a compositional bias: low complexity; sequence MPPAVPAAAATA. Residues 1–32 are disordered; it reads MPPAVPAAAATARQSASGRERNFKDKDKPESV. Basic and acidic residues predominate over residues 18-31; the sequence is GRERNFKDKDKPES.

This sequence belongs to the TCP-1 chaperonin family. As to quaternary structure, heterooligomeric complex of about 850 to 900 kDa that forms two stacked rings, 12 to 16 nm in diameter.

It localises to the cytoplasm. Molecular chaperone; assists the folding of proteins upon ATP hydrolysis. Known to play a role, in vitro, in the folding of actin and tubulin. This is T-complex protein 1 subunit delta (cct-4) from Caenorhabditis elegans.